We begin with the raw amino-acid sequence, 420 residues long: Serine hydroxymethyltransferase (420 aa).

Residues Leu-117 and 121–123 (GHL) each bind (6S)-5,6,7,8-tetrahydrofolate. Position 226 is an N6-(pyridoxal phosphate)lysine (Lys-226).

This sequence belongs to the SHMT family. As to quaternary structure, homodimer. The cofactor is pyridoxal 5'-phosphate.

The protein resides in the cytoplasm. The enzyme catalyses (6R)-5,10-methylene-5,6,7,8-tetrahydrofolate + glycine + H2O = (6S)-5,6,7,8-tetrahydrofolate + L-serine. It functions in the pathway one-carbon metabolism; tetrahydrofolate interconversion. The protein operates within amino-acid biosynthesis; glycine biosynthesis; glycine from L-serine: step 1/1. Its function is as follows. Catalyzes the reversible interconversion of serine and glycine with tetrahydrofolate (THF) serving as the one-carbon carrier. This reaction serves as the major source of one-carbon groups required for the biosynthesis of purines, thymidylate, methionine, and other important biomolecules. Also exhibits THF-independent aldolase activity toward beta-hydroxyamino acids, producing glycine and aldehydes, via a retro-aldol mechanism. The polypeptide is Serine hydroxymethyltransferase (Rhodopirellula baltica (strain DSM 10527 / NCIMB 13988 / SH1)).